The sequence spans 315 residues: 1-aminocyclopropane-1-carboxylate oxidase 1 (315 aa).

Residues 153–253 (PNFGTKVSNY…RMSLASFYNP (101 aa)) form the Fe2OG dioxygenase domain. Positions 177, 179, and 234 each coordinate Fe cation.

Belongs to the iron/ascorbate-dependent oxidoreductase family. Fe cation serves as cofactor. In terms of tissue distribution, predominantly expressed in the petals and the stigma and style.

The enzyme catalyses 1-aminocyclopropane-1-carboxylate + L-ascorbate + O2 = ethene + L-dehydroascorbate + hydrogen cyanide + CO2 + 2 H2O. Its pathway is alkene biosynthesis; ethylene biosynthesis via S-adenosyl-L-methionine; ethylene from S-adenosyl-L-methionine: step 2/2. The sequence is that of 1-aminocyclopropane-1-carboxylate oxidase 1 (ACO1) from Solanum lycopersicum (Tomato).